Consider the following 255-residue polypeptide: Ribosomal RNA large subunit methyltransferase E (255 aa).

S-adenosyl-L-methionine-binding residues include glycine 50, tryptophan 52, aspartate 68, aspartate 84, and aspartate 108. Catalysis depends on lysine 148, which acts as the Proton acceptor. Residues 195 to 253 (PVRSGEIYDVTVDSVGRTGDGIAMIQGFAVIVKNASPGERLRIKIGPVKQRFAFASILE) enclose the TRAM domain.

Belongs to the class I-like SAM-binding methyltransferase superfamily. RNA methyltransferase RlmE family.

It localises to the cytoplasm. It catalyses the reaction uridine(2552) in 23S rRNA + S-adenosyl-L-methionine = 2'-O-methyluridine(2552) in 23S rRNA + S-adenosyl-L-homocysteine + H(+). Specifically methylates the uridine in position 2552 of 23S rRNA at the 2'-O position of the ribose in the fully assembled 50S ribosomal subunit. In Methanothrix thermoacetophila (strain DSM 6194 / JCM 14653 / NBRC 101360 / PT) (Methanosaeta thermophila), this protein is Ribosomal RNA large subunit methyltransferase E.